The sequence spans 932 residues: Glycine dehydrogenase (decarboxylating) (932 aa).

An N6-(pyridoxal phosphate)lysine modification is found at lysine 685.

It belongs to the GcvP family. The glycine cleavage system is composed of four proteins: P, T, L and H. Pyridoxal 5'-phosphate is required as a cofactor.

The enzyme catalyses N(6)-[(R)-lipoyl]-L-lysyl-[glycine-cleavage complex H protein] + glycine + H(+) = N(6)-[(R)-S(8)-aminomethyldihydrolipoyl]-L-lysyl-[glycine-cleavage complex H protein] + CO2. The glycine cleavage system catalyzes the degradation of glycine. The P protein binds the alpha-amino group of glycine through its pyridoxal phosphate cofactor; CO(2) is released and the remaining methylamine moiety is then transferred to the lipoamide cofactor of the H protein. The chain is Glycine dehydrogenase (decarboxylating) from Brucella canis (strain ATCC 23365 / NCTC 10854 / RM-666).